The chain runs to 212 residues: External core antigen (212 aa).

Positions 1–19 (MQLFHLCLIISCTCPTVQA) are cleaved as a signal peptide. Positions 25–27 (GWL) are HBEAG. The segment at 165–212 (NAPILSTLPETTVVRRRGRSPRRRTPSPRRRRSQSPRRRRSQSRESQC) is disordered. The span at 178-205 (VRRRGRSPRRRTPSPRRRRSQSPRRRRS) shows a compositional bias: basic residues. Residues 184-190 (SPRRRTP) form a 1; half-length repeat. A 3 X 8 AA repeats of S-P-R-R-R-R-S-Q region spans residues 184 to 206 (SPRRRTPSPRRRRSQSPRRRRSQ). Positions 184–212 (SPRRRTPSPRRRRSQSPRRRRSQSRESQC) are excised as a propeptide. 2 tandem repeats follow at residues 191 to 198 (SPRRRRSQ) and 199 to 206 (SPRRRRSQ).

Belongs to the orthohepadnavirus precore antigen family. As to quaternary structure, homodimerizes. Post-translationally, phosphorylated. In terms of processing, cleaved by host furin.

The protein localises to the secreted. It is found in the host nucleus. In terms of biological role, may regulate immune response to the intracellular capsid in acting as a T-cell tolerogen, by having an immunoregulatory effect which prevents destruction of infected cells by cytotoxic T-cells. This immune regulation may predispose to chronicity during perinatal infections and prevent severe liver injury during adult infections. In Hepatitis B virus genotype D subtype ayw (isolate Italy/CI/1992) (HBV-D), this protein is External core antigen.